A 669-amino-acid polypeptide reads, in one-letter code: DNA ligase (669 aa).

Residues 34-38 (DAEYD), 83-84 (SL), and Glu114 contribute to the NAD(+) site. The active-site N6-AMP-lysine intermediate is Lys116. Positions 137, 171, 287, and 311 each coordinate NAD(+). Positions 405, 408, 423, and 428 each coordinate Zn(2+). Residues 591-669 (NVESYFAGKT…EERFLQELNK (79 aa)) enclose the BRCT domain.

It belongs to the NAD-dependent DNA ligase family. LigA subfamily. Mg(2+) is required as a cofactor. It depends on Mn(2+) as a cofactor.

The catalysed reaction is NAD(+) + (deoxyribonucleotide)n-3'-hydroxyl + 5'-phospho-(deoxyribonucleotide)m = (deoxyribonucleotide)n+m + AMP + beta-nicotinamide D-nucleotide.. Its function is as follows. DNA ligase that catalyzes the formation of phosphodiester linkages between 5'-phosphoryl and 3'-hydroxyl groups in double-stranded DNA using NAD as a coenzyme and as the energy source for the reaction. It is essential for DNA replication and repair of damaged DNA. The sequence is that of DNA ligase from Bacillus mycoides (strain KBAB4) (Bacillus weihenstephanensis).